Reading from the N-terminus, the 104-residue chain is Large ribosomal subunit protein uL23 (104 aa).

The protein belongs to the universal ribosomal protein uL23 family. Part of the 50S ribosomal subunit. Contacts protein L29, and trigger factor when it is bound to the ribosome.

Functionally, one of the early assembly proteins it binds 23S rRNA. One of the proteins that surrounds the polypeptide exit tunnel on the outside of the ribosome. Forms the main docking site for trigger factor binding to the ribosome. This Paraburkholderia phytofirmans (strain DSM 17436 / LMG 22146 / PsJN) (Burkholderia phytofirmans) protein is Large ribosomal subunit protein uL23.